The chain runs to 291 residues: 4-hydroxy-tetrahydrodipicolinate synthase (291 aa).

T47 is a binding site for pyruvate. Catalysis depends on Y134, which acts as the Proton donor/acceptor. The active-site Schiff-base intermediate with substrate is the K162. Residue I205 coordinates pyruvate.

This sequence belongs to the DapA family. Homotetramer; dimer of dimers.

Its subcellular location is the cytoplasm. It catalyses the reaction L-aspartate 4-semialdehyde + pyruvate = (2S,4S)-4-hydroxy-2,3,4,5-tetrahydrodipicolinate + H2O + H(+). It functions in the pathway amino-acid biosynthesis; L-lysine biosynthesis via DAP pathway; (S)-tetrahydrodipicolinate from L-aspartate: step 3/4. Functionally, catalyzes the condensation of (S)-aspartate-beta-semialdehyde [(S)-ASA] and pyruvate to 4-hydroxy-tetrahydrodipicolinate (HTPA). This is 4-hydroxy-tetrahydrodipicolinate synthase from Methanoculleus marisnigri (strain ATCC 35101 / DSM 1498 / JR1).